The primary structure comprises 243 residues: 2-C-methyl-D-erythritol 4-phosphate cytidylyltransferase (243 aa).

Belongs to the IspD/TarI cytidylyltransferase family. IspD subfamily.

The enzyme catalyses 2-C-methyl-D-erythritol 4-phosphate + CTP + H(+) = 4-CDP-2-C-methyl-D-erythritol + diphosphate. Its pathway is isoprenoid biosynthesis; isopentenyl diphosphate biosynthesis via DXP pathway; isopentenyl diphosphate from 1-deoxy-D-xylulose 5-phosphate: step 2/6. Catalyzes the formation of 4-diphosphocytidyl-2-C-methyl-D-erythritol from CTP and 2-C-methyl-D-erythritol 4-phosphate (MEP). The protein is 2-C-methyl-D-erythritol 4-phosphate cytidylyltransferase of Pelodictyon phaeoclathratiforme (strain DSM 5477 / BU-1).